A 331-amino-acid polypeptide reads, in one-letter code: 4-hydroxy-3-methylbut-2-enyl diphosphate reductase (331 aa).

Cys12 contributes to the [4Fe-4S] cluster binding site. Residues His43 and His81 each contribute to the (2E)-4-hydroxy-3-methylbut-2-enyl diphosphate site. 2 residues coordinate dimethylallyl diphosphate: His43 and His81. His43 and His81 together coordinate isopentenyl diphosphate. [4Fe-4S] cluster is bound at residue Cys103. His131 contributes to the (2E)-4-hydroxy-3-methylbut-2-enyl diphosphate binding site. His131 contacts dimethylallyl diphosphate. His131 serves as a coordination point for isopentenyl diphosphate. The active-site Proton donor is Glu133. Thr170 provides a ligand contact to (2E)-4-hydroxy-3-methylbut-2-enyl diphosphate. Cys198 contacts [4Fe-4S] cluster. (2E)-4-hydroxy-3-methylbut-2-enyl diphosphate is bound by residues Ser226, Asn228, and Ser271. Positions 226, 228, and 271 each coordinate dimethylallyl diphosphate. The isopentenyl diphosphate site is built by Ser226, Asn228, and Ser271.

This sequence belongs to the IspH family. The cofactor is [4Fe-4S] cluster.

The catalysed reaction is isopentenyl diphosphate + 2 oxidized [2Fe-2S]-[ferredoxin] + H2O = (2E)-4-hydroxy-3-methylbut-2-enyl diphosphate + 2 reduced [2Fe-2S]-[ferredoxin] + 2 H(+). The enzyme catalyses dimethylallyl diphosphate + 2 oxidized [2Fe-2S]-[ferredoxin] + H2O = (2E)-4-hydroxy-3-methylbut-2-enyl diphosphate + 2 reduced [2Fe-2S]-[ferredoxin] + 2 H(+). The protein operates within isoprenoid biosynthesis; dimethylallyl diphosphate biosynthesis; dimethylallyl diphosphate from (2E)-4-hydroxy-3-methylbutenyl diphosphate: step 1/1. It participates in isoprenoid biosynthesis; isopentenyl diphosphate biosynthesis via DXP pathway; isopentenyl diphosphate from 1-deoxy-D-xylulose 5-phosphate: step 6/6. In terms of biological role, catalyzes the conversion of 1-hydroxy-2-methyl-2-(E)-butenyl 4-diphosphate (HMBPP) into a mixture of isopentenyl diphosphate (IPP) and dimethylallyl diphosphate (DMAPP). Acts in the terminal step of the DOXP/MEP pathway for isoprenoid precursor biosynthesis. This Listeria monocytogenes serotype 4b (strain CLIP80459) protein is 4-hydroxy-3-methylbut-2-enyl diphosphate reductase.